Reading from the N-terminus, the 315-residue chain is Fructose-1,6-bisphosphatase class 1 (315 aa).

Mg(2+)-binding residues include glutamate 90, aspartate 111, leucine 113, and aspartate 114. Substrate-binding positions include 114–117, tyrosine 222, and lysine 253; that span reads DGSS. A Mg(2+)-binding site is contributed by glutamate 259.

Belongs to the FBPase class 1 family. As to quaternary structure, homotetramer. Mg(2+) serves as cofactor.

It is found in the cytoplasm. It catalyses the reaction beta-D-fructose 1,6-bisphosphate + H2O = beta-D-fructose 6-phosphate + phosphate. Its pathway is carbohydrate biosynthesis; gluconeogenesis. This chain is Fructose-1,6-bisphosphatase class 1, found in Trichlorobacter lovleyi (strain ATCC BAA-1151 / DSM 17278 / SZ) (Geobacter lovleyi).